A 918-amino-acid polypeptide reads, in one-letter code: Pre-pro-metalloprotease PrtV (918 aa).

A signal peptide spans 1–23 (MKTIKKTLLAAAIASFFSSGLYA). Residues 24-105 (QTPIDLGVVN…QKGPHKARVF (82 aa)) constitute a propeptide that is removed on maturation. His330 contributes to the Zn(2+) binding site. Glu331 is a catalytic residue. His334 is a binding site for Zn(2+). The Ca(2+) site is built by Ile757, Asp782, Asp821, and Asp825. PKD domains follow at residues 758 to 835 (APVA…TIKV) and 855 to 918 (VTMW…KVKL). The propeptide occupies 835–918 (VDTPNALPQA…VTTITIKVKL (84 aa)).

This sequence belongs to the peptidase M6 family. Requires Zn(2+) as cofactor. Post-translationally, prtV is expressed as an inactive, multidomain, 102 kDa pre-pro-metalloprotease. To form a catalytically active protease, PrtV is first secreted, and then it undergoes N- and C-terminal cleavages during envelope translocation to yield a 81 kDa pro-metalloprotease. Outside the cell, the 81 kDa pro-metalloprotease undergoes an auto-cleavage. The two major products of autoproteolysis (37 kDa and 18 kDa) together form the so called 55 kDa active complex.

Its subcellular location is the secreted. With respect to regulation, calcium plays an important structural role, providing stability to this protein in the cytoplasm. Outside the cell, the decrease of the calcium concentration triggers the autoproteolysis. PrtV activity is increased by 25 mM of Sr(2+) or Mg(2+) and to some extent by Ba(2+); however, Ba(2+) inhibits PrtV at higher concentrations. Completely inhibited by EDTA and 1,10-phenanthroline. Functionally, metalloprotease that exhibits a cytotoxic effect leading to cell death. In host tissues, it could play a role in pathogenesis by modulating the stability of the extracellular matrix components such as fibronectin and fibrinogen. Also able to cleave plasminogen. This chain is Pre-pro-metalloprotease PrtV, found in Vibrio cholerae serotype O1 (strain ATCC 39315 / El Tor Inaba N16961).